We begin with the raw amino-acid sequence, 124 residues long: Small ribosomal subunit protein bS6 (124 aa).

Residues 99-124 (PLPAPRIVPGSEPEPVQQQEAAAVEA) are disordered. A compositionally biased stretch (low complexity) spans 111-124 (PEPVQQQEAAAVEA).

Belongs to the bacterial ribosomal protein bS6 family.

Its function is as follows. Binds together with bS18 to 16S ribosomal RNA. This chain is Small ribosomal subunit protein bS6, found in Prochlorococcus marinus (strain MIT 9313).